Here is a 487-residue protein sequence, read N- to C-terminus: Structure-specific endonuclease subunit SLX1 (487 aa).

The GIY-YIG domain occupies 27-109 (PFYACYLLRS…QKPELSRHLR (83 aa)). Residues 44–69 (RTYVGSTPDPPRRIRQHNGELKQGAW) form a disordered region. The SLX1-type zinc finger occupies 262-328 (CHLCQERIAF…LPYQGLCPNC (67 aa)). Over residues 359 to 396 (KAEKAEKAEKAEKAEKAEKAEKAGRKVRQREMKTKKGD) the composition is skewed to basic and acidic residues. Disordered regions lie at residues 359–407 (KAEK…QPES) and 433–475 (PARS…SEPE). Positions 397–407 (QSNGTVAQPES) are enriched in polar residues. Basic and acidic residues predominate over residues 438–455 (KSKDVGGEGIRHSTHTDD). Residues 465–475 (ETEDESESEPE) are compositionally biased toward acidic residues.

Belongs to the SLX1 family. Forms a heterodimer with SLX4. A divalent metal cation is required as a cofactor.

It localises to the nucleus. Catalytic subunit of the SLX1-SLX4 structure-specific endonuclease that resolves DNA secondary structures generated during DNA repair and recombination. Has endonuclease activity towards branched DNA substrates, introducing single-strand cuts in duplex DNA close to junctions with ss-DNA. This Cryptococcus neoformans var. neoformans serotype D (strain B-3501A) (Filobasidiella neoformans) protein is Structure-specific endonuclease subunit SLX1.